We begin with the raw amino-acid sequence, 407 residues long: MPSVCMPTTYRPASCLSKTYLSSSCQPSNRRPTGCISSSMGTYGLFCEGAFNGNEKETMQVLNDRLANYLEKVRQLEKENAELEGKIQDVYQGQVLTMCPDYQSYFQTIEELQQKVLCTKAENARMIVHIDNAKLAADDFRTKYETELALRQLVEADTNGLRRILDELTLNKADLEAQVESLKEELLCLKRNHEEEVGVLRQQLGDRLNIEVDAAPPVDLTRMLEEMRCQYETMVETNHRDVEEWFNMQMEELNKQVATSSEQLQSYQSDIIDLRRTVNTLEIELQAQHSLRDSLENTLGETEGRFTSQLSQMQCMITNVESQLSDIRCDLERQNQEYKVLLDVKARLECEIDTYRGLLESEDSKLPCNPCSTPSCQPCAPSPGVSRTVCVPHTVCVPCSPCLQTRY.

Positions 1–55 (MPSVCMPTTYRPASCLSKTYLSSSCQPSNRRPTGCISSSMGTYGLFCEGAFNGNE) are head. In terms of domain architecture, IF rod spans 55 to 366 (EKETMQVLND…GLLESEDSKL (312 aa)). Residues 56–90 (KETMQVLNDRLANYLEKVRQLEKENAELEGKIQDV) are coil 1A. The tract at residues 91 to 101 (YQGQVLTMCPD) is linker 1. A coil 1B region spans residues 102–202 (YQSYFQTIEE…HEEEVGVLRQ (101 aa)). The segment at 203–218 (QLGDRLNIEVDAAPPV) is linker 12. The tract at residues 219 to 362 (DLTRMLEEMR…DTYRGLLESE (144 aa)) is coil 2. The tract at residues 363–407 (DSKLPCNPCSTPSCQPCAPSPGVSRTVCVPHTVCVPCSPCLQTRY) is tail.

It belongs to the intermediate filament family. As to expression, cuticle of the hair shaft.

The chain is Keratin, type I cuticular Ha2 (Krt32) from Mus musculus (Mouse).